Here is a 415-residue protein sequence, read N- to C-terminus: Homoserine O-acetyltransferase (415 aa).

Positions 47–369 constitute an AB hydrolase-1 domain; it reads NAVLVCHGLT…HGHDAFLVEP (323 aa). Catalysis depends on S155, which acts as the Nucleophile. Substrate is bound at residue R226. Active-site residues include D329 and H362. D363 contacts substrate. The segment at 387-415 is disordered; that stretch reads RAVTDTATDGGEPDEEKDFAPVHSSLFSR.

Belongs to the AB hydrolase superfamily. MetX family. In terms of assembly, homodimer.

The protein resides in the cytoplasm. It carries out the reaction L-homoserine + acetyl-CoA = O-acetyl-L-homoserine + CoA. The protein operates within amino-acid biosynthesis; L-methionine biosynthesis via de novo pathway; O-acetyl-L-homoserine from L-homoserine: step 1/1. In terms of biological role, transfers an acetyl group from acetyl-CoA to L-homoserine, forming acetyl-L-homoserine. This chain is Homoserine O-acetyltransferase, found in Haloferax gibbonsii (strain ATCC 33959 / DSM 4427 / JCM 8863 / NBRC 102184 / NCIMB 2188 / Ma 2.38).